We begin with the raw amino-acid sequence, 611 residues long: MRSNGCGDLRKEHIDNSVQLCGWVDRRRDHGGVIFIDLRDRTGTVQITVDPDLGAEAFAVAEHLRSETVLQISGKVRARPAESLNEKLATGAVEVLASGITVLNSVKGNLPFPVSVHDEENTREELRLRHRYLDLRRKRMNDNLRLRAQTIQAARRFLEDEGFIEVETPVLTRSTPEGARDYVLPSRVCGGEWFALPQSPQLFKQLLMVGGIERYYQVARCFRDEDLRADRQPEFTQLDIEMSFMDQEEILQLNESLICSIWKAVKGIDLPRPFPRMTWHDAMERYGTDRPDTRYGMELTNVSDIVKDMGFKVFSGAVKNGGAVKCIAVPGGNEALSNVRIKPGGDVFSEAQKAGAGGLAFIRVRDGGEIDTIGAIKDNLSDEQKQELLSRTGAEPGTLLLFGAGDTATVNKALDRVRQYLAKELGMVKADRDNDQWNFLWVVDFPMFEFNSDENRYEALHHPFCAPNAEDLGSDASQWADTLPGARAQAYDLVLNGLELGGGSLRIHDSALQRQVLQTVGLPLEEAQEQFGFLMDALDVGAPPHGGLAFGVDRMVMLLAGEESIRDTIAFPKTQQARCLMTNAPGGVADKQLEELHVASTWVDPTEEDSN.

Glutamate 177 contacts L-aspartate. An aspartate region spans residues glutamine 201–lysine 204. Arginine 223 lines the L-aspartate pocket. Residues arginine 223–glutamate 225 and glutamine 232 contribute to the ATP site. Histidine 461 serves as a coordination point for L-aspartate. Glutamate 499 is a binding site for ATP. Residue arginine 506 participates in L-aspartate binding. Glycine 551–arginine 554 is a binding site for ATP.

This sequence belongs to the class-II aminoacyl-tRNA synthetase family. Type 1 subfamily. In terms of assembly, homodimer.

It localises to the cytoplasm. The enzyme catalyses tRNA(Asx) + L-aspartate + ATP = L-aspartyl-tRNA(Asx) + AMP + diphosphate. Its function is as follows. Aspartyl-tRNA synthetase with relaxed tRNA specificity since it is able to aspartylate not only its cognate tRNA(Asp) but also tRNA(Asn). Reaction proceeds in two steps: L-aspartate is first activated by ATP to form Asp-AMP and then transferred to the acceptor end of tRNA(Asp/Asn). This is Aspartate--tRNA(Asp/Asn) ligase from Synechococcus sp. (strain WH7803).